The following is a 146-amino-acid chain: MAGELTPEEEAQYKKAFSAVDTDGNGTINAQELGAALKATGKNLSEAQLRKLISEVDSDGDGEISFQEFLTAAKKARAGLEDLQVAFRAFDQDGDGHITVDELRRAMAGLGQPLPQEELDAMIREADVDQDGRVNYEEFARMLAQE.

Ala-2 carries the N-acetylalanine modification. 4 EF-hand domains span residues 8-43 (EEEA…TGKN), 44-74 (LSEA…TAAK), 78-113 (AGLE…LGQP), and 114-146 (LPQE…LAQE). Ca(2+) is bound by residues Asp-21, Asp-23, Asn-25, Thr-27, Glu-32, Asp-57, Asp-59, Asp-61, Glu-63, Glu-68, Asp-91, Asp-93, Asp-95, His-97, Glu-102, Asp-127, Asp-129, Asp-131, Arg-133, and Glu-138.

Associates with transglutaminase 3. As to expression, particularly abundant in the epidermis where its expression is directly related to keratinocyte differentiation. Very low expression in lung.

In terms of biological role, binds calcium. May be involved in terminal differentiation of keratinocytes. The chain is Calmodulin-like protein 5 (CALML5) from Homo sapiens (Human).